Consider the following 1827-residue polypeptide: Sucrase-isomaltase, intestinal (1827 aa).

The Cytoplasmic portion of the chain corresponds to 2–12 (ARKKFSGLEIS). Position 7 is a phosphoserine; by PKA (Ser-7). Residues 13-32 (LIVLFVIVTIIAIALIVVLA) traverse the membrane as a helical; Signal-anchor for type II membrane protein segment. The Lumenal portion of the chain corresponds to 33 to 1827 (TKTPAVDEIS…LEEPIEINWS (1795 aa)). Residues 40–61 (EISDSTSTPATTRVTTNPSDSG) are disordered. A compositionally biased stretch (low complexity) spans 45–55 (TSTPATTRVTT). A P-type 1 domain is found at 61–110 (GKCPNVLNDPVNVRINCIPEQFPTEGICAQRGCCWRPWNDSLIPWCFFVD). Cystine bridges form between Cys-63–Cys-94, Cys-77–Cys-93, and Cys-88–Cys-106. N-linked (GlcNAc...) asparagine glycosylation occurs at Asn-99. The tract at residues 110–1007 (DNHGYNVQDM…DLQLNTANAR (898 aa)) is isomaltase. Tyr-237 and Tyr-239 each carry sulfotyrosine. Substrate-binding residues include Asp-264 and Asp-388. Tyr-391 and Tyr-400 each carry sulfotyrosine. Asn-437 and Asn-455 each carry an N-linked (GlcNAc...) asparagine glycan. Asp-505 serves as the catalytic Nucleophile; for isomaltase activity. An intrachain disulfide couples Cys-520 to Cys-545. Arg-588 contributes to the substrate binding site. The active-site For isomaltase activity is Asp-604. An intrachain disulfide couples Cys-635 to Cys-646. Residue His-662 coordinates substrate. Tyr-667, Tyr-763, and Tyr-765 each carry sulfotyrosine. Asn-823, Asn-855, Asn-904, and Asn-926 each carry an N-linked (GlcNAc...) asparagine glycan. Residues 932 to 978 (NQIFSENERFNCYPDADLATEQKCTQRGCVWRTGSSLSKAPECYFPR) enclose the P-type 2 domain. The sucrase stretch occupies residues 1008 to 1827 (IKLPSDPIST…LEEPIEINWS (820 aa)). 4 N-linked (GlcNAc...) asparagine glycosylation sites follow: Asn-1235, Asn-1303, Asn-1340, and Asn-1354. The active-site Nucleophile; for sucrase activity is Asp-1394. Glu-1397 serves as the catalytic For sucrase activity. Asn-1403 carries an N-linked (GlcNAc...) asparagine glycan. The active-site Proton donor; for isomaltase activity is Asp-1500. N-linked (GlcNAc...) asparagine glycans are attached at residues Asn-1535, Asn-1572, Asn-1675, Asn-1748, Asn-1763, and Asn-1815.

It belongs to the glycosyl hydrolase 31 family. As to quaternary structure, the resulting sucrase and isomaltase subunits stay associated with one another in a complex by non-covalent linkages. The precursor is proteolytically cleaved when exposed to pancreatic proteases in the intestinal lumen. Post-translationally, sulfated. Expressed in the poorly differentiated crypt cells of the small intestine as well as in the mature villous cells. Expressed at very low levels in the colon.

The protein resides in the apical cell membrane. It catalyses the reaction Hydrolysis of sucrose and maltose by an alpha-D-glucosidase-type action.. The catalysed reaction is Hydrolysis of (1-&gt;6)-alpha-D-glucosidic linkages in some oligosaccharides produced from starch and glycogen by alpha-amylase, and in isomaltose.. Its function is as follows. Plays an important role in the final stage of carbohydrate digestion. Isomaltase activity is specific for both alpha-1,4- and alpha-1,6-oligosaccharides. This Homo sapiens (Human) protein is Sucrase-isomaltase, intestinal (SI).